The chain runs to 554 residues: DnaJ homolog subfamily C member 1 (554 aa).

Positions 1 to 47 (MTAPCSQPAQLPGRRQLGLVPFPPPPPRTPLLWLLLLLLAAVAPARG) are cleaved as a signal peptide. The Lumenal portion of the chain corresponds to 48-153 (WESGDLELFD…RRVRKMSNAE (106 aa)). The 65-residue stretch at 65-129 (NFYQFLGVQQ…ERRQRYDDIL (65 aa)) folds into the J domain. The chain crosses the membrane as a helical span at residues 154–174 (LALLLFIILTVGHYAVVWSIY). Over 175–554 (LEKQLDELLS…LVQKKKQAKS (380 aa)) the chain is Cytoplasmic. The region spanning 325–379 (KQAPEWTEEDLSQLTRSMVKFPGGTPGRWEKIAHELGRSVTDVTTKAKQLKDSVT) is the SANT 1 domain. Ser381 is subject to Phosphoserine. Polar residues predominate over residues 392–405 (STVQNSRPIKTATT). The tract at residues 392–500 (STVQNSRPIK…RSAEEPWTQN (109 aa)) is disordered. Over residues 421–432 (AAEEEQEGDSGE) the composition is skewed to acidic residues. Ser430 carries the post-translational modification Phosphoserine. Positions 455 to 472 (AKPEPEEKSRAKRQKDFD) are enriched in basic and acidic residues. The segment covering 473-482 (IAEQNESSDE) has biased composition (acidic residues). Residues Ser479, Ser480, Ser484, and Ser492 each carry the phosphoserine modification. Basic and acidic residues predominate over residues 483–494 (ESLRKERARSAE). Residues 492–547 (SAEEPWTQNQQKLLELALQQYPRGSSDRWDKIARCVPSKSKEDCIARYKLLVELVQ) enclose the SANT 2 domain.

Interacts (via J domain) with HSPA5. Interacts (via cytosolic domain) with ribosomes. Interacts (via SANT 2 domain) with SERPINA3; the interaction delays the formation of the covalent inhibitory complex SERPINA3-chymotrypsin, but does not alter the catalytic activity of SERPINA3. Interacts (via SANT 2 domain) with ITIH4 (via C-terminus); the interaction protects ITIH4 against in vitro cleavage by kallikrein.

The protein localises to the endoplasmic reticulum membrane. It localises to the nucleus membrane. The protein resides in the microsome membrane. In terms of biological role, may modulate protein synthesis. The polypeptide is DnaJ homolog subfamily C member 1 (DNAJC1) (Homo sapiens (Human)).